The sequence spans 155 residues: MRRRTAEKRNIVPDPIYGDILLSKFINRLMYDGKKSLAQQIVYSALERLAEATKENPIEAFHKAIDNVKPVVEVRSRRVGGSTYQVPFEVPENRATSLAIRWIVTSAQSKKGRDMVSKLSQELIDAYNNTGPSVKKKEDVHRMAEANRAFAHFRW.

This sequence belongs to the universal ribosomal protein uS7 family. As to quaternary structure, part of the 30S ribosomal subunit. Contacts proteins S9 and S11.

Its function is as follows. One of the primary rRNA binding proteins, it binds directly to 16S rRNA where it nucleates assembly of the head domain of the 30S subunit. Is located at the subunit interface close to the decoding center, probably blocks exit of the E-site tRNA. This is Small ribosomal subunit protein uS7 from Petrotoga mobilis (strain DSM 10674 / SJ95).